We begin with the raw amino-acid sequence, 262 residues long: Glycerol uptake facilitator protein (262 aa).

The Cytoplasmic segment spans residues 1–7; sequence MNFCSKK. Residues 8 to 36 traverse the membrane as a helical segment; sequence KILKQCFFEFLGTGLIIFLGISSLVVSKL. At 37–41 the chain is on the extracellular side; that stretch reads TNFHF. The chain crosses the membrane as a helical span at residues 42–62; it reads NHCEISCIWGLGVFISICFCS. Residues 63–65 lie on the Cytoplasmic side of the membrane; that stretch reads SVS. An intramembrane segment occupies 66–69; that stretch reads GAHL. Residues 70–72 carry the NPA 1 motif; the sequence is NPA. Positions 70-80 form an intramembrane region, helical; the sequence is NPAITIFLFLS. The Cytoplasmic segment spans residues 81 to 86; sequence SQFNKK. Residues 87–110 form a helical membrane-spanning segment; the sequence is KVIPYILSQISGTFFFTFLIYLIF. Residues 111–145 are Extracellular-facing; the sequence is NNLLNSFESKYNIVRGTKKSLELASLFCVFPKENY. A helical transmembrane segment spans residues 146-171; that stretch reads NFIHDFILEILIGIIFIIILMKLSEK. Residues 172–180 lie on the Cytoplasmic side of the membrane; sequence NNLFKFYKF. A helical transmembrane segment spans residues 181–197; the sequence is INPFLIGTLVIIINLFL. Residues 198–201 lie on the Extracellular side of the membrane; that stretch reads TSYS. The stretch at 202 to 205 is an intramembrane region; sequence NITL. An NPA 2 motif is present at residues 206–208; the sequence is NPA. Residues 206-219 constitute an intramembrane region (helical); it reads NPARDLGPRIFLSL. Residues 220–234 lie on the Extracellular side of the membrane; sequence IGWGKLAFTGDDNII. Residues 235 to 259 traverse the membrane as a helical segment; sequence FPYFLIPTIAPIIGINLGGWIYILY. The Cytoplasmic segment spans residues 260–262; sequence IKK.

It belongs to the MIP/aquaporin (TC 1.A.8) family.

Its subcellular location is the cell membrane. It carries out the reaction glycerol(in) = glycerol(out). In terms of biological role, mediates glycerol diffusion across the cytoplasmic membrane via a pore-type mechanism. This chain is Glycerol uptake facilitator protein (glpF), found in Buchnera aphidicola subsp. Schizaphis graminum (strain Sg).